Here is a 429-residue protein sequence, read N- to C-terminus: Adenylosuccinate synthetase (429 aa).

GTP-binding positions include 12–18 and 40–42; these read GDEGKGK and GHT. Asp-13 serves as the catalytic Proton acceptor. Mg(2+)-binding residues include Asp-13 and Gly-40. Residues 13–16, 38–41, Thr-129, Arg-143, Gln-223, Thr-238, and Arg-302 contribute to the IMP site; these read DEGK and NAGH. The active-site Proton donor is His-41. 298-304 is a substrate binding site; the sequence is TVTGRAR. Residues Arg-304, 330–332, and 412–414 contribute to the GTP site; these read KLD and STS.

It belongs to the adenylosuccinate synthetase family. Homodimer. The cofactor is Mg(2+).

It is found in the cytoplasm. The catalysed reaction is IMP + L-aspartate + GTP = N(6)-(1,2-dicarboxyethyl)-AMP + GDP + phosphate + 2 H(+). It functions in the pathway purine metabolism; AMP biosynthesis via de novo pathway; AMP from IMP: step 1/2. Plays an important role in the de novo pathway of purine nucleotide biosynthesis. Catalyzes the first committed step in the biosynthesis of AMP from IMP. In Acidiphilium cryptum (strain JF-5), this protein is Adenylosuccinate synthetase.